The following is a 273-amino-acid chain: Undecaprenyl-diphosphatase (273 aa).

The next 7 membrane-spanning stretches (helical) occupy residues 6 to 26 (SLLIAAILGVVEGLTEFLPVS), 45 to 65 (AKTFEVVIQLGSILAVVVMFW), 90 to 110 (LTLIHILLGMIPAVVLGLLFH), 116 to 136 (LFNPINVMYALVVGGLLLIAA), 190 to 210 (YAASEFSFLLAVPMMMGATAL), 222 to 242 (GDIPMFAVGFITAFVVALIAI), and 252 to 272 (ISFIPFAIYRFIVAAAVYVVF).

This sequence belongs to the UppP family.

Its subcellular location is the cell inner membrane. The catalysed reaction is di-trans,octa-cis-undecaprenyl diphosphate + H2O = di-trans,octa-cis-undecaprenyl phosphate + phosphate + H(+). Catalyzes the dephosphorylation of undecaprenyl diphosphate (UPP). Confers resistance to bacitracin. The protein is Undecaprenyl-diphosphatase of Escherichia coli O7:K1 (strain IAI39 / ExPEC).